We begin with the raw amino-acid sequence, 293 residues long: Ribosomal protein L11 methyltransferase (293 aa).

The S-adenosyl-L-methionine site is built by threonine 145, glycine 166, aspartate 188, and asparagine 230.

Belongs to the methyltransferase superfamily. PrmA family.

The protein resides in the cytoplasm. It carries out the reaction L-lysyl-[protein] + 3 S-adenosyl-L-methionine = N(6),N(6),N(6)-trimethyl-L-lysyl-[protein] + 3 S-adenosyl-L-homocysteine + 3 H(+). Its function is as follows. Methylates ribosomal protein L11. The polypeptide is Ribosomal protein L11 methyltransferase (Haemophilus ducreyi (strain 35000HP / ATCC 700724)).